The chain runs to 176 residues: ATP-dependent protease subunit HslV (176 aa).

Residue threonine 2 is part of the active site. 3 residues coordinate Na(+): glycine 157, cysteine 160, and threonine 163.

Belongs to the peptidase T1B family. HslV subfamily. A double ring-shaped homohexamer of HslV is capped on each side by a ring-shaped HslU homohexamer. The assembly of the HslU/HslV complex is dependent on binding of ATP.

The protein localises to the cytoplasm. It catalyses the reaction ATP-dependent cleavage of peptide bonds with broad specificity.. Its activity is regulated as follows. Allosterically activated by HslU binding. In terms of biological role, protease subunit of a proteasome-like degradation complex believed to be a general protein degrading machinery. The chain is ATP-dependent protease subunit HslV from Pseudomonas entomophila (strain L48).